Consider the following 347-residue polypeptide: Protein RecA (347 aa).

64–71 (GPESSGKT) contacts ATP.

The protein belongs to the RecA family.

The protein resides in the cytoplasm. Can catalyze the hydrolysis of ATP in the presence of single-stranded DNA, the ATP-dependent uptake of single-stranded DNA by duplex DNA, and the ATP-dependent hybridization of homologous single-stranded DNAs. It interacts with LexA causing its activation and leading to its autocatalytic cleavage. The polypeptide is Protein RecA (Bartonella henselae (strain ATCC 49882 / DSM 28221 / CCUG 30454 / Houston 1) (Rochalimaea henselae)).